The sequence spans 228 residues: Ribonuclease HII (228 aa).

An RNase H type-2 domain is found at Gly-11–Met-202. 3 residues coordinate a divalent metal cation: Asp-17, Glu-18, and Asp-111.

It belongs to the RNase HII family. The cofactor is Mn(2+). Mg(2+) serves as cofactor.

Its subcellular location is the cytoplasm. It carries out the reaction Endonucleolytic cleavage to 5'-phosphomonoester.. Functionally, endonuclease that specifically degrades the RNA of RNA-DNA hybrids. The chain is Ribonuclease HII from Saccharopolyspora erythraea (strain ATCC 11635 / DSM 40517 / JCM 4748 / NBRC 13426 / NCIMB 8594 / NRRL 2338).